A 143-amino-acid chain; its full sequence is Transcriptional regulator MraZ (143 aa).

2 consecutive SpoVT-AbrB domains span residues 5-47 and 76-119; these read TYTP…PRAA and TDEQ…DAQA.

This sequence belongs to the MraZ family. Forms oligomers.

Its subcellular location is the cytoplasm. It localises to the nucleoid. This is Transcriptional regulator MraZ from Mycobacterium bovis (strain ATCC BAA-935 / AF2122/97).